Consider the following 361-residue polypeptide: Putative pumilio homolog 22 (361 aa).

In terms of domain architecture, PUM-HD spans 5–348 (RGYDLASQVL…NIVAIIDSET (344 aa)). Pumilio repeat units lie at residues 27 to 63 (HITYRHLLVLSSDDNGCVILKKVITIADDFLKDEFLD) and 64 to 103 (LIAQHAHSLSMHDLGISLIQHVLELDFTKKTTQDDKRLHE). One copy of the Pumilio 3; degenerate repeat lies at 104–131 (LMAEFDEVLSTSVTADVDKLHKLASKLM). The stretch at 132–167 (LDSDLFFEFVITRRGSLMIQIILGKSEEVDQVILAG) is one Pumilio 4 repeat. Residues 168–205 (VKQRFIDVTTNFYGYRIMIQTIKVFKKRGDLKVYDQIL) form a Pumilio 5; degenerate repeat. One copy of the Pumilio 6; degenerate repeat lies at 206–243 (RLIGVHALYLTKDPDMGNKTFQHAINLHHQDCTTFIAC). Pumilio repeat units lie at residues 244–284 (GLQS…EIVK) and 285–319 (CDEDTLVRLATDEYGNNILKKFLALAKEHKEDFFG).

It localises to the cytoplasm. Functionally, sequence-specific RNA-binding protein that regulates translation and mRNA stability by binding the 3'-UTR of target mRNAs. The chain is Putative pumilio homolog 22 (APUM22) from Arabidopsis thaliana (Mouse-ear cress).